Consider the following 101-residue polypeptide: Small ribosomal subunit protein uS14 (101 aa).

It belongs to the universal ribosomal protein uS14 family. Part of the 30S ribosomal subunit. Contacts proteins S3 and S10.

Functionally, binds 16S rRNA, required for the assembly of 30S particles and may also be responsible for determining the conformation of the 16S rRNA at the A site. This chain is Small ribosomal subunit protein uS14, found in Aliivibrio salmonicida (strain LFI1238) (Vibrio salmonicida (strain LFI1238)).